Consider the following 132-residue polypeptide: NADPH-dependent 7-cyano-7-deazaguanine reductase (132 aa).

C48 serves as the catalytic Thioimide intermediate. D55 serves as the catalytic Proton donor. Residues 70–72 (LEL) and 89–90 (ME) each bind substrate.

The protein belongs to the GTP cyclohydrolase I family. QueF type 1 subfamily.

It is found in the cytoplasm. The catalysed reaction is 7-aminomethyl-7-carbaguanine + 2 NADP(+) = 7-cyano-7-deazaguanine + 2 NADPH + 3 H(+). The protein operates within tRNA modification; tRNA-queuosine biosynthesis. In terms of biological role, catalyzes the NADPH-dependent reduction of 7-cyano-7-deazaguanine (preQ0) to 7-aminomethyl-7-deazaguanine (preQ1). This Elusimicrobium minutum (strain Pei191) protein is NADPH-dependent 7-cyano-7-deazaguanine reductase.